Here is a 252-residue protein sequence, read N- to C-terminus: Pyrroloquinoline-quinone synthase (252 aa).

Belongs to the PqqC family.

The catalysed reaction is 6-(2-amino-2-carboxyethyl)-7,8-dioxo-1,2,3,4,7,8-hexahydroquinoline-2,4-dicarboxylate + 3 O2 = pyrroloquinoline quinone + 2 H2O2 + 2 H2O + H(+). The protein operates within cofactor biosynthesis; pyrroloquinoline quinone biosynthesis. In terms of biological role, ring cyclization and eight-electron oxidation of 3a-(2-amino-2-carboxyethyl)-4,5-dioxo-4,5,6,7,8,9-hexahydroquinoline-7,9-dicarboxylic-acid to PQQ. This Acinetobacter baumannii (strain AB307-0294) protein is Pyrroloquinoline-quinone synthase.